The chain runs to 378 residues: O-methyltransferase gsfD (378 aa).

S-adenosyl-L-methionine contacts are provided by residues 219–220 (GG), Asp244, 266–267 (DM), and Arg282. His286 (proton acceptor) is an active-site residue.

The protein belongs to the class I-like SAM-binding methyltransferase superfamily. Cation-independent O-methyltransferase family.

It catalyses the reaction desmethyl-dehydrogriseofulvin + S-adenosyl-L-methionine = dehydrogriseofulvin + S-adenosyl-L-homocysteine + H(+). The protein operates within secondary metabolite biosynthesis; terpenoid biosynthesis. Its function is as follows. O-methyltransferase; part of the gene cluster that mediates the biosynthesis of griseofulvin, an important antifungal drug that has been in use for a long time for treating dermatophyte infections. The first step of the pathway is the formation of the heptaketide backbone by gsfA which is initiated by priming with acetyl-CoA, followed by sequential condensations of 6 malonyl-CoA units. The resulting benzophenone can undergo a spontaneous dehydration to form norlichexanthone. However, the true precursor for the griseofulvin biosynthesis is not norlichexanthone, but the heptaketide benzophenone that is O-methylated at 3-OH by gsfB to produce griseophenone D which is further methylated at 9-OH by gsfC to yield griseophenone C. Griseophenone C is then substrate of halogenase gsfI which is responsible for the regio-specific chlorination at the C13 position to form griseophenone B. The cytochrome P450 gsfF catalyzes the coupling of orcinol and phloroglucinol rings in griseophenone B to form desmethyl-dehydrogriseofulvin A which is further methylated at 5-OH by gsfD to yield dehydrogriseofulvin. Finally, gsfE performs stereospecific reduction of enone 18 of dehydrogriseofulvin to afford the final product griseofulvin. The sequence is that of O-methyltransferase gsfD from Penicillium aethiopicum.